The following is a 382-amino-acid chain: tRNA (guanine(26)-N(2))-dimethyltransferase (382 aa).

A Trm1 methyltransferase domain is found at 4–373 (VEIIEGKARI…KNLDEIKECI (370 aa)). S-adenosyl-L-methionine is bound by residues R44, R69, and D87. Positions 246, 249, 263, and 266 each coordinate Zn(2+).

This sequence belongs to the class I-like SAM-binding methyltransferase superfamily. Trm1 family.

The enzyme catalyses guanosine(26) in tRNA + 2 S-adenosyl-L-methionine = N(2)-dimethylguanosine(26) in tRNA + 2 S-adenosyl-L-homocysteine + 2 H(+). Functionally, dimethylates a single guanine residue at position 26 of a number of tRNAs using S-adenosyl-L-methionine as donor of the methyl groups. The chain is tRNA (guanine(26)-N(2))-dimethyltransferase from Sulfolobus acidocaldarius (strain ATCC 33909 / DSM 639 / JCM 8929 / NBRC 15157 / NCIMB 11770).